A 327-amino-acid polypeptide reads, in one-letter code: Lipoyl synthase (327 aa).

The [4Fe-4S] cluster site is built by Cys-66, Cys-71, Cys-77, Cys-92, Cys-96, Cys-99, and Ser-306. The region spanning Phe-78–Thr-295 is the Radical SAM core domain.

It belongs to the radical SAM superfamily. Lipoyl synthase family. The cofactor is [4Fe-4S] cluster.

Its subcellular location is the cytoplasm. The catalysed reaction is [[Fe-S] cluster scaffold protein carrying a second [4Fe-4S](2+) cluster] + N(6)-octanoyl-L-lysyl-[protein] + 2 oxidized [2Fe-2S]-[ferredoxin] + 2 S-adenosyl-L-methionine + 4 H(+) = [[Fe-S] cluster scaffold protein] + N(6)-[(R)-dihydrolipoyl]-L-lysyl-[protein] + 4 Fe(3+) + 2 hydrogen sulfide + 2 5'-deoxyadenosine + 2 L-methionine + 2 reduced [2Fe-2S]-[ferredoxin]. The protein operates within protein modification; protein lipoylation via endogenous pathway; protein N(6)-(lipoyl)lysine from octanoyl-[acyl-carrier-protein]: step 2/2. In terms of biological role, catalyzes the radical-mediated insertion of two sulfur atoms into the C-6 and C-8 positions of the octanoyl moiety bound to the lipoyl domains of lipoate-dependent enzymes, thereby converting the octanoylated domains into lipoylated derivatives. This chain is Lipoyl synthase, found in Neisseria gonorrhoeae (strain ATCC 700825 / FA 1090).